We begin with the raw amino-acid sequence, 387 residues long: Sorting nexin-7 (387 aa).

The PX domain maps to Lys30 to Leu151. Residues Arg73, Gln75, Lys103, and Arg117 each coordinate a 1,2-diacyl-sn-glycero-3-phospho-(1D-myo-inositol-3-phosphate). In terms of domain architecture, BAR spans Gly178–Pro387.

It belongs to the sorting nexin family. In terms of assembly, heterodimer; heterodimerizes with SNX4.

It localises to the early endosome membrane. In terms of biological role, involved in the regulation of endocytosis and in several stages of intracellular trafficking. Together with SNX4, involved in autophagosome assembly by regulating trafficking and recycling of phospholipid scramblase ATG9A. In Homo sapiens (Human), this protein is Sorting nexin-7.